A 316-amino-acid chain; its full sequence is Probable porphobilinogen deaminase (316 aa).

Cys234 carries the post-translational modification S-(dipyrrolylmethanemethyl)cysteine.

The protein belongs to the HMBS family. Requires dipyrromethane as cofactor.

It carries out the reaction 4 porphobilinogen + H2O = hydroxymethylbilane + 4 NH4(+). The protein operates within porphyrin-containing compound metabolism; protoporphyrin-IX biosynthesis; coproporphyrinogen-III from 5-aminolevulinate: step 2/4. Tetrapolymerization of the monopyrrole PBG into the hydroxymethylbilane pre-uroporphyrinogen in several discrete steps. The sequence is that of Probable porphobilinogen deaminase from Methanosarcina barkeri (strain Fusaro / DSM 804).